The chain runs to 339 residues: Probable scoulerine-9-O-methyltransferase OMT3B (339 aa).

Met161 lines the S-adenosyl-L-methionine pocket. Asp164 contacts substrate. Residues Thr165, Gly191, Asp214, 228 to 229, and Lys242 each bind S-adenosyl-L-methionine; that span reads DV. 243 to 247 is a binding site for substrate; that stretch reads SILHE. The active-site Proton acceptor is His246.

It belongs to the class I-like SAM-binding methyltransferase superfamily. Cation-independent O-methyltransferase family. COMT subfamily.

The catalysed reaction is (S)-scoulerine + S-adenosyl-L-methionine = (S)-tetrahydrocolumbamine + S-adenosyl-L-homocysteine + H(+). Its pathway is alkaloid biosynthesis. Functionally, methyltransferase involved in the biosynthesis of the benzylisoquinoline alkaloid noscapine. Catalyzes the conversion of (S)-scoulerine to (S)-tetrahydrocolumbamine. This is Probable scoulerine-9-O-methyltransferase OMT3B from Papaver somniferum (Opium poppy).